Consider the following 462-residue polypeptide: NEDD8-activating enzyme E1 regulatory subunit (462 aa).

This sequence belongs to the ubiquitin-activating E1 family. ULA1 subfamily. Heterodimer of UBA3 and ULA1. The complex binds NEDD8 and UBC12.

It participates in protein modification; protein neddylation. Its function is as follows. Regulatory subunit of the dimeric UBA3-ULA1 E1 enzyme. E1 activates NEDD8/RUB1 by first adenylating its C-terminal glycine residue with ATP, thereafter linking this residue to the side chain of the catalytic cysteine, yielding a NEDD8-UBA3 thioester and free AMP. E1 finally transfers NEDD8 to the catalytic cysteine of UBC12. The sequence is that of NEDD8-activating enzyme E1 regulatory subunit (ULA1) from Saccharomyces cerevisiae (strain ATCC 204508 / S288c) (Baker's yeast).